We begin with the raw amino-acid sequence, 505 residues long: Maturase K (505 aa).

Belongs to the intron maturase 2 family. MatK subfamily.

Its subcellular location is the plastid. The protein localises to the chloroplast. In terms of biological role, usually encoded in the trnK tRNA gene intron. Probably assists in splicing its own and other chloroplast group II introns. This chain is Maturase K, found in Allamanda cathartica (Yellow allamanda).